The chain runs to 407 residues: Indoleamine 2,3-dioxygenase 1 (407 aa).

Heme b is bound at residue H350. Residues 362-407 (SKKKPTDGDKSEEPSNVESRGTGGTNPMTFLRSVKDTTEKALLSWP) are disordered. A compositionally biased stretch (basic and acidic residues) spans 365-374 (KPTDGDKSEE).

It belongs to the indoleamine 2,3-dioxygenase family. As to quaternary structure, monomer. The cofactor is heme b. As to expression, highly expressed in epididymis, duodemum, jejunum, ileum, colon and spleen. Highly expressed in epididymis, prostate, duodemum, jejunum, ileum, colon and spleen, not detected in the liver (at protein level). Expressed in tumors only upon exposure to IFN gamma. Constitutively expressed in placenta in trophoblast cells. Expression is restricted to perinuclear regions of primary trophoblast giant cells (TGCs) of fetal origin at mid-gestation (10.5 dpc). After placentation (14 dpc), no IDO expression was detected at the maternal-fetal interface.

The protein resides in the cytoplasm. It is found in the cytosol. The catalysed reaction is D-tryptophan + O2 = N-formyl-D-kynurenine. The enzyme catalyses L-tryptophan + O2 = N-formyl-L-kynurenine. Its activity is regulated as follows. Activity is inhibited by and MTH-trp (methylthiohydantoin-DL-tryptophan), modestly inhibited by L-1MT (1-methyl-L-tryptophan) but not D-1MT (1-methyl-D-tryptophan). Catalyzes the first and rate limiting step of the catabolism of the essential amino acid tryptophan along the kynurenine pathway. Involved in the peripheral immune tolerance, contributing to maintain homeostasis by preventing autoimmunity or immunopathology that would result from uncontrolled and overreacting immune responses. Tryptophan shortage inhibits T lymphocytes division and accumulation of tryptophan catabolites induces T-cell apoptosis and differentiation of regulatory T-cells. Acts as a suppressor of anti-tumor immunity. Limits the growth of intracellular pathogens by depriving tryptophan. Protects the fetus from maternal immune rejection. The sequence is that of Indoleamine 2,3-dioxygenase 1 from Mus musculus (Mouse).